The following is a 188-amino-acid chain: E3 ubiquitin-protein ligase RNF183 (188 aa).

At 1–157 (MAEQQGREPE…RECFRNPHFR (157 aa)) the chain is on the cytoplasmic side. The RING-type zinc-finger motif lies at 11–58 (CPVCWNPFNNTFHTPKVLDCCHSFCVECLAHISLVTPTRRRLLCPLCR). The helical; Anchor for type IV membrane protein transmembrane segment at 158 to 178 (IFAYMMAVILCGTVLFIFSIF) threads the bilayer. Residues 179 to 188 (CTRRFFWGVG) lie on the Lumenal side of the membrane.

As to quaternary structure, interacts with FATE1. Interacts with SEC16A. Interacts with BCL2L1. Autoubiquitinated (in vitro).

Its subcellular location is the endoplasmic reticulum membrane. It is found in the endoplasmic reticulum. The protein localises to the golgi apparatus. It localises to the cis-Golgi network membrane. The protein resides in the lysosome. It catalyses the reaction S-ubiquitinyl-[E2 ubiquitin-conjugating enzyme]-L-cysteine + [acceptor protein]-L-lysine = [E2 ubiquitin-conjugating enzyme]-L-cysteine + N(6)-ubiquitinyl-[acceptor protein]-L-lysine.. Its pathway is protein modification; protein ubiquitination. Its function is as follows. Acts as an E3 ubiquitin ligase catalyzing the covalent attachment of ubiquitin moieties onto substrate proteins. Triggers apoptosis in response to prolonged ER stress by mediating the polyubiquitination and subsequent proteasomal degradation of BCL2L1. May collaborate with FATE1 to restrain BIK protein levels thus regulating apoptotic signaling. This chain is E3 ubiquitin-protein ligase RNF183 (RNF183), found in Bos taurus (Bovine).